A 107-amino-acid polypeptide reads, in one-letter code: uncharacterized protein (107 aa).

A helical membrane pass occupies residues 12–32 (IILNIFLALLLVYFIFHCIYG).

It localises to the membrane. This is an uncharacterized protein from Rickettsia prowazekii (strain Madrid E).